The following is a 400-amino-acid chain: Cysteine desulfurase (400 aa).

Pyridoxal 5'-phosphate-binding positions include 71 to 72, asparagine 150, glutamine 178, and 198 to 200; these read GT and SGH. Lysine 201 bears the N6-(pyridoxal phosphate)lysine mark. A pyridoxal 5'-phosphate-binding site is contributed by threonine 236. Cysteine 324 serves as the catalytic Cysteine persulfide intermediate. Cysteine 324 provides a ligand contact to [2Fe-2S] cluster.

Belongs to the class-V pyridoxal-phosphate-dependent aminotransferase family. NifS/IscS subfamily. In terms of assembly, homodimer. The cofactor is pyridoxal 5'-phosphate.

It carries out the reaction (sulfur carrier)-H + L-cysteine = (sulfur carrier)-SH + L-alanine. Catalyzes the removal of elemental sulfur atoms from cysteine to produce alanine. Seems to participate in the biosynthesis of the nitrogenase metalloclusters by providing the inorganic sulfur required for the Fe-S core formation. In Nostoc sp. (strain PCC 7120 / SAG 25.82 / UTEX 2576), this protein is Cysteine desulfurase.